Reading from the N-terminus, the 106-residue chain is NADH dehydrogenase [ubiquinone] 1 beta subcomplex subunit 10-B (106 aa).

The tract at residues 1 to 25 (MGRKKGLPEFEESAPDGFDPENPYK) is disordered.

This sequence belongs to the complex I NDUFB10 subunit family. In terms of assembly, complex I is composed of at least 49 different subunits.

The protein localises to the mitochondrion inner membrane. Its function is as follows. Accessory subunit of the mitochondrial membrane respiratory chain NADH dehydrogenase (Complex I), that is believed not to be involved in catalysis. Complex I functions in the transfer of electrons from NADH to the respiratory chain. The immediate electron acceptor for the enzyme is believed to be ubiquinone. This Arabidopsis thaliana (Mouse-ear cress) protein is NADH dehydrogenase [ubiquinone] 1 beta subcomplex subunit 10-B.